A 77-amino-acid chain; its full sequence is Beta-defensin 135 (77 aa).

Residues 1–24 (MATRSVLLALVVLNLLFYVPPGRS) form the signal peptide. Disulfide bonds link C37–C64, C44–C58, and C48–C65.

The protein belongs to the beta-defensin family.

The protein resides in the secreted. In terms of biological role, has antibacterial activity. In Homo sapiens (Human), this protein is Beta-defensin 135 (DEFB135).